The sequence spans 87 residues: Small ribosomal subunit protein uS17 (87 aa).

It belongs to the universal ribosomal protein uS17 family. In terms of assembly, part of the 30S ribosomal subunit.

One of the primary rRNA binding proteins, it binds specifically to the 5'-end of 16S ribosomal RNA. This is Small ribosomal subunit protein uS17 from Alkalilimnicola ehrlichii (strain ATCC BAA-1101 / DSM 17681 / MLHE-1).